Consider the following 319-residue polypeptide: Exopolyphosphatase 2 (319 aa).

This sequence belongs to the GppA/Ppx family. Homodimer.

The enzyme catalyses [phosphate](n) + H2O = [phosphate](n-1) + phosphate + H(+). Its activity is regulated as follows. Exopolyphosphatase activity is inhibited by ppGpp alarmones produced during the bacterial stringent response. Degradation of inorganic polyphosphates (polyP). Releases orthophosphate processively from the ends of the polyP chain. Prefers long-chain length polyphosphates as substrates. The protein is Exopolyphosphatase 2 of Mycobacterium tuberculosis (strain CDC 1551 / Oshkosh).